The primary structure comprises 250 residues: Probable transcriptional regulatory protein Ppha_0657 (250 aa).

This sequence belongs to the TACO1 family.

It localises to the cytoplasm. This Pelodictyon phaeoclathratiforme (strain DSM 5477 / BU-1) protein is Probable transcriptional regulatory protein Ppha_0657.